The primary structure comprises 503 residues: Major facilitator superfamily domain-containing protein 4A (503 aa).

The next 12 helical transmembrane spans lie at 19–39 (LTYW…GPTL), 53–73 (ITWV…LGGV), 82–102 (LFLL…IPFC), 105–125 (VGVL…IDTI), 139–159 (AIFL…SPLI), 214–234 (YAFW…FYLI), 289–309 (IWNA…TLFM), 338–358 (GYLP…SIPV), 366–386 (SMLF…LLSQ), 392–412 (MFVG…SMLA), 427–447 (VLVT…GSVM), and 455–475 (FLVC…VLLV). The segment at 484 to 503 (SEDSACKPPGLDGEATSYQS) is disordered.

This sequence belongs to the major facilitator superfamily.

Its subcellular location is the membrane. The polypeptide is Major facilitator superfamily domain-containing protein 4A (mfsd4a) (Xenopus tropicalis (Western clawed frog)).